Consider the following 129-residue polypeptide: Larval/pupal rigid cuticle protein 66 (129 aa).

Residues 1–17 form the signal peptide; sequence MLVKFVACFVFVAVASA. Positions 18–90 constitute a Chitin-binding type R&amp;R domain; it reads SDFSSFSYGV…ALIAAAPYIT (73 aa).

As to expression, expressed in larval wing disc, forewing disc, diapausing wing, adult wing, and in very low amounts in fat body and testes.

Component of the rigid cuticle of the larva and pupa of Hyalophora cecropia. This is Larval/pupal rigid cuticle protein 66 (CP66) from Hyalophora cecropia (Cecropia moth).